The chain runs to 602 residues: MFS-type efflux transporter pyiT (602 aa).

The disordered stretch occupies residues 1 to 33 (MEKAKDSLPTTGDPVPSQGTINPVDETGGSASD). A run of 7 helical transmembrane segments spans residues 43–63 (FWFTFSSLVLTAFLSALEGSV), 123–143 (WLTIGAVVIFTVGSGICGGAT), 156–176 (GLGSAGINMLVELILCDLLPL), 185–205 (IIFMFVILGSVIGPFLGGILV), 212–232 (WVFYINIPFSGVCVVLLFFFL), 251–271 (FFGNFLLAASVGSCLFALTYG), and 282–302 (IIVSLVLGLLGHVAFMFFEAS). N-linked (GlcNAc...) asparagine glycosylation is present at Asn-317. 6 helical membrane-spanning segments follow: residues 325 to 345 (IATFLQTLVSFWVLYFLPLYF), 357 to 377 (GVMLLPFSVVYALSSLAGGAL), 386 to 406 (NIHFASFALMTIGMGTLTILN), 410 to 430 (SLAVIVVLEMIVALAIGVPTA), 451 to 471 (TFAFLRSVGTIWGVSIPAAIF), and 524 to 544 (LERVWQIGIVFAGVGFLVIFL). Over residues 564-585 (IPQTAADNSASRPNTINDTASQ) the composition is skewed to polar residues. The segment at 564–602 (IPQTAADNSASRPNTINDTASQAPILKQRRSTNQERETV) is disordered. Asn-580 carries N-linked (GlcNAc...) asparagine glycosylation.

The protein belongs to the major facilitator superfamily.

The protein resides in the cell membrane. In terms of biological role, MFS-type efflux transporter; part of the gene cluster that mediates the biosynthesis of the mycotoxin pyrichalasin H, a tyrosine-derived cytochalasan that inhibits the growth of rice seedlings, but also inhibits lymphocyte capping and actin polymerization and alters cell morphology. Pyrichalasin H is indicated as the responsible agent for the genus-specific pathogenicity of M.grisea toward crabgrass. PyiT might be involved in the excretion of pyrichalasin H. The chain is MFS-type efflux transporter pyiT from Pyricularia grisea (Crabgrass-specific blast fungus).